We begin with the raw amino-acid sequence, 125 residues long: Large ribosomal subunit protein bL12 (125 aa).

The protein belongs to the bacterial ribosomal protein bL12 family. In terms of assembly, homodimer. Part of the ribosomal stalk of the 50S ribosomal subunit. Forms a multimeric L10(L12)X complex, where L10 forms an elongated spine to which 2 to 4 L12 dimers bind in a sequential fashion. Binds GTP-bound translation factors.

Forms part of the ribosomal stalk which helps the ribosome interact with GTP-bound translation factors. Is thus essential for accurate translation. The protein is Large ribosomal subunit protein bL12 of Erythrobacter litoralis (strain HTCC2594).